The primary structure comprises 122 residues: Large ribosomal subunit protein uL14 (122 aa).

This sequence belongs to the universal ribosomal protein uL14 family. Part of the 50S ribosomal subunit. Forms a cluster with proteins L3 and L19. In the 70S ribosome, L14 and L19 interact and together make contacts with the 16S rRNA in bridges B5 and B8.

Its function is as follows. Binds to 23S rRNA. Forms part of two intersubunit bridges in the 70S ribosome. The chain is Large ribosomal subunit protein uL14 from Chloroflexus aggregans (strain MD-66 / DSM 9485).